Here is a 171-residue protein sequence, read N- to C-terminus: Endoribonuclease YbeY (171 aa).

Zn(2+) contacts are provided by histidine 130, histidine 134, and histidine 140.

Belongs to the endoribonuclease YbeY family. Zn(2+) serves as cofactor.

Its subcellular location is the cytoplasm. Functionally, single strand-specific metallo-endoribonuclease involved in late-stage 70S ribosome quality control and in maturation of the 3' terminus of the 16S rRNA. The chain is Endoribonuclease YbeY from Neisseria meningitidis serogroup A / serotype 4A (strain DSM 15465 / Z2491).